The sequence spans 101 residues: Large ribosomal subunit protein uL23 (101 aa).

Belongs to the universal ribosomal protein uL23 family. As to quaternary structure, part of the 50S ribosomal subunit. Contacts protein L29, and trigger factor when it is bound to the ribosome.

Functionally, one of the early assembly proteins it binds 23S rRNA. One of the proteins that surrounds the polypeptide exit tunnel on the outside of the ribosome. Forms the main docking site for trigger factor binding to the ribosome. This chain is Large ribosomal subunit protein uL23, found in Corynebacterium jeikeium (strain K411).